The following is a 110-amino-acid chain: U1-lycotoxin-Ls1dd (110 aa).

The N-terminal stretch at 1 to 20 (MKFVLLFGVLLVTLFSYSSA) is a signal peptide. Positions 21–44 (EMLDDFDQADEDELLSLIEKEEAR) are excised as a propeptide. 4 disulfide bridges follow: Cys-47/Cys-62, Cys-54/Cys-71, Cys-61/Cys-89, and Cys-73/Cys-87.

This sequence belongs to the neurotoxin 19 (CSTX) family. 03 subfamily. In terms of tissue distribution, expressed by the venom gland.

It is found in the secreted. This is U1-lycotoxin-Ls1dd from Lycosa singoriensis (Wolf spider).